The following is a 433-amino-acid chain: 23S rRNA (uracil(1939)-C(5))-methyltransferase RlmD (433 aa).

A TRAM domain is found at 1-53 (MPTAVIESLDHEGRGIARVEGKAVFIEGGLPGETVEYRVLRSKPNYEQAEATR). Residues cysteine 66, cysteine 72, cysteine 75, and cysteine 154 each contribute to the [4Fe-4S] cluster site. S-adenosyl-L-methionine-binding residues include glutamine 263, phenylalanine 292, asparagine 297, glutamate 313, asparagine 341, and aspartate 362. Cysteine 389 serves as the catalytic Nucleophile.

Belongs to the class I-like SAM-binding methyltransferase superfamily. RNA M5U methyltransferase family. RlmD subfamily.

The catalysed reaction is uridine(1939) in 23S rRNA + S-adenosyl-L-methionine = 5-methyluridine(1939) in 23S rRNA + S-adenosyl-L-homocysteine + H(+). Its function is as follows. Catalyzes the formation of 5-methyl-uridine at position 1939 (m5U1939) in 23S rRNA. This is 23S rRNA (uracil(1939)-C(5))-methyltransferase RlmD from Azoarcus sp. (strain BH72).